The primary structure comprises 151 residues: uncharacterized protein (151 aa).

The 149-residue stretch at 3–151 (IKIDDLTGRQ…PNSVFMTKKL (149 aa)) folds into the N-acetyltransferase domain.

This sequence belongs to the acetyltransferase family.

This is an uncharacterized protein from Bacillus subtilis (strain 168).